The chain runs to 555 residues: Glutamine--tRNA ligase (555 aa).

Residues Pro34–His44 carry the 'HIGH' region motif. Residues Glu35–Asn37 and His41–Ser47 contribute to the ATP site. Positions 67 and 212 each coordinate L-glutamine. Residues Thr231, Arg261–Leu262, and Met269–Lys271 contribute to the ATP site. Positions Val268–Arg272 match the 'KMSKS' region motif. The tract at residues Thr317–Glu324 is interaction with tRNA.

The protein belongs to the class-I aminoacyl-tRNA synthetase family. In terms of assembly, monomer.

It is found in the cytoplasm. It catalyses the reaction tRNA(Gln) + L-glutamine + ATP = L-glutaminyl-tRNA(Gln) + AMP + diphosphate. The protein is Glutamine--tRNA ligase of Salmonella choleraesuis (strain SC-B67).